The primary structure comprises 94 residues: Putative pterin-4-alpha-carbinolamine dehydratase (94 aa).

The protein belongs to the pterin-4-alpha-carbinolamine dehydratase family.

It carries out the reaction (4aS,6R)-4a-hydroxy-L-erythro-5,6,7,8-tetrahydrobiopterin = (6R)-L-erythro-6,7-dihydrobiopterin + H2O. The polypeptide is Putative pterin-4-alpha-carbinolamine dehydratase (Mycobacterium avium (strain 104)).